Here is a 218-residue protein sequence, read N- to C-terminus: Large ribosomal subunit protein bL25 (218 aa).

The interval 185–218 is disordered; sequence ARAAEEEAPAAEETTAEPELVRERREPRAEEEEE. Residues 190 to 200 show a composition bias toward acidic residues; it reads EEAPAAEETTA. Positions 203-212 are enriched in basic and acidic residues; the sequence is ELVRERREPR.

It belongs to the bacterial ribosomal protein bL25 family. CTC subfamily. As to quaternary structure, part of the 50S ribosomal subunit; part of the 5S rRNA/L5/L18/L25 subcomplex. Contacts the 5S rRNA. Binds to the 5S rRNA independently of L5 and L18.

In terms of biological role, this is one of the proteins that binds to the 5S RNA in the ribosome where it forms part of the central protuberance. The chain is Large ribosomal subunit protein bL25 from Roseiflexus castenholzii (strain DSM 13941 / HLO8).